The primary structure comprises 491 residues: Nucleotidyltransferase MB21D2 (491 aa).

A compositionally biased stretch (polar residues) spans 431-442 (RGSTTSIPSPQS). The segment at 431–452 (RGSTTSIPSPQSDGGDPNQPDD) is disordered. Position 435 is a phosphothreonine (Thr-435). Phosphoserine occurs at positions 436, 439, and 442.

Belongs to the mab-21 family.

Its function is as follows. Probable nucleotidyltransferase that catalyzes the formation of cyclic dinucleotide second messenger in response to some unknown stimulus. The sequence is that of Nucleotidyltransferase MB21D2 from Homo sapiens (Human).